The primary structure comprises 363 residues: Cytoskeleton protein RodZ (363 aa).

The Cytoplasmic segment spans residues 1–111 (MNTEASQDQT…LGKKHKKRDG (111 aa)). The region spanning 19–79 (LRQARESLGL…KLVHLPEDEL (61 aa)) is the HTH cro/C1-type domain. The H-T-H motif DNA-binding region spans 30 to 49 (QQTVAERLCLKVSTIRDIEE). A helical; Signal-anchor for type II membrane protein membrane pass occupies residues 112–132 (WLMSFTWLIVLVVLGLTGAWW). Residues 133–363 (WQNHQAQQAE…RVARLTVGVE (231 aa)) are Periplasmic-facing. Positions 151–277 (SAQLSQNGGQ…PLPTADAGVS (127 aa)) are disordered. Over residues 188 to 199 (PLTNHSVSAITN) the composition is skewed to polar residues. Residues 200 to 225 (SAPTTSSVPTTSSATTSSVPTTSSVP) are compositionally biased toward low complexity. Polar residues predominate over residues 226–243 (KINSTEPVDTANTNTTMH). Residues 247–259 (AASAAVSPSQVPQ) show a composition bias toward low complexity.

The protein belongs to the RodZ family.

It localises to the cell inner membrane. Cytoskeletal protein that is involved in cell-shape control through regulation of the length of the long axis. The protein is Cytoskeleton protein RodZ of Yersinia pseudotuberculosis serotype O:1b (strain IP 31758).